The chain runs to 444 residues: Phosphoglucosamine mutase (444 aa).

Catalysis depends on Ser-103, which acts as the Phosphoserine intermediate. Residues Ser-103, Asp-242, Asp-244, and Asp-246 each coordinate Mg(2+). Ser-103 is subject to Phosphoserine.

It belongs to the phosphohexose mutase family. Mg(2+) serves as cofactor. Activated by phosphorylation.

It catalyses the reaction alpha-D-glucosamine 1-phosphate = D-glucosamine 6-phosphate. Functionally, catalyzes the conversion of glucosamine-6-phosphate to glucosamine-1-phosphate. The chain is Phosphoglucosamine mutase from Hydrogenovibrio crunogenus (strain DSM 25203 / XCL-2) (Thiomicrospira crunogena).